The chain runs to 556 residues: DNA ligase B (556 aa).

Lys126 functions as the N6-AMP-lysine intermediate in the catalytic mechanism.

It belongs to the NAD-dependent DNA ligase family. LigB subfamily.

The catalysed reaction is NAD(+) + (deoxyribonucleotide)n-3'-hydroxyl + 5'-phospho-(deoxyribonucleotide)m = (deoxyribonucleotide)n+m + AMP + beta-nicotinamide D-nucleotide.. Catalyzes the formation of phosphodiester linkages between 5'-phosphoryl and 3'-hydroxyl groups in double-stranded DNA using NAD as a coenzyme and as the energy source for the reaction. The polypeptide is DNA ligase B (Stutzerimonas stutzeri (strain A1501) (Pseudomonas stutzeri)).